A 363-amino-acid chain; its full sequence is Serpentine receptor class T-55 (363 aa).

The N-terminal stretch at 1–18 is a signal peptide; the sequence is MKLRHFLIFLMLIPISSS. The next 7 helical transmembrane spans lie at 70 to 90, 107 to 127, 143 to 163, 187 to 207, 231 to 251, 278 to 298, and 303 to 323; these read IYYI…IWVF, VFIG…PGFV, IVGK…AFLG, WLTV…TVLF, FLYF…ACLC, ICIS…FVLP, and FFHV…IMYI.

It belongs to the nematode receptor-like protein srt family.

The protein localises to the membrane. This chain is Serpentine receptor class T-55 (srt-55), found in Caenorhabditis elegans.